Here is a 253-residue protein sequence, read N- to C-terminus: Ferritin-2, chloroplastic (253 aa).

The transit peptide at 1 to 45 (MLHKASPALSLLSSGYTGGGNLFPPSRNSSNLLFSPSGSRFSVQA) directs the protein to the chloroplast. The extension peptide (EP) stretch occupies residues 46 to 82 (AKGTNTKSLTGVVFEPFEEVKKEMELVPTTPFVSLAR). In terms of domain architecture, Ferritin-like diiron spans 83 to 236 (HKFSDDSESA…EYVAQLRRIG (154 aa)). Glu100, Glu135, His138, Glu184, and Gln218 together coordinate Fe cation.

The protein belongs to the ferritin family. In terms of assembly, oligomer of 24 subunits. There are two types of subunits: L (light) chain and H (heavy) chain. The major chain can be light or heavy, depending on the species and tissue type. The functional molecule forms a roughly spherical shell with a diameter of 12 nm and contains a central cavity into which the insoluble mineral iron core is deposited.

It localises to the plastid. It is found in the chloroplast. It carries out the reaction 4 Fe(2+) + O2 + 4 H(+) = 4 Fe(3+) + 2 H2O. In terms of biological role, stores iron in a soluble, non-toxic, readily available form. Important for iron homeostasis. Has ferroxidase activity. Iron is taken up in the ferrous form and deposited as ferric hydroxides after oxidation. This is Ferritin-2, chloroplastic (FER2) from Arabidopsis thaliana (Mouse-ear cress).